A 557-amino-acid polypeptide reads, in one-letter code: 2-isopropylmalate synthase (557 aa).

The Pyruvate carboxyltransferase domain occupies 33–307 (PIWCSSDLRD…DPQLDFSDID (275 aa)). Asp-42, His-246, His-248, and Asn-282 together coordinate Mg(2+). The interval 439-557 (ANAPYALVSH…SLSQQEAKAA (119 aa)) is regulatory domain.

Belongs to the alpha-IPM synthase/homocitrate synthase family. LeuA type 2 subfamily. Homodimer. Mg(2+) is required as a cofactor.

It is found in the cytoplasm. The enzyme catalyses 3-methyl-2-oxobutanoate + acetyl-CoA + H2O = (2S)-2-isopropylmalate + CoA + H(+). Its pathway is amino-acid biosynthesis; L-leucine biosynthesis; L-leucine from 3-methyl-2-oxobutanoate: step 1/4. Functionally, catalyzes the condensation of the acetyl group of acetyl-CoA with 3-methyl-2-oxobutanoate (2-ketoisovalerate) to form 3-carboxy-3-hydroxy-4-methylpentanoate (2-isopropylmalate). The chain is 2-isopropylmalate synthase from Pseudomonas putida (strain GB-1).